The sequence spans 340 residues: Glycerol-3-phosphate dehydrogenase [NAD(P)+] (340 aa).

Ser11, Trp12, Arg32, Arg33, and Lys106 together coordinate NADPH. 3 residues coordinate sn-glycerol 3-phosphate: Lys106, Gly138, and Ser140. Residue Ala142 coordinates NADPH. Residues Lys193, Asp246, Ser256, Arg257, and Asn258 each coordinate sn-glycerol 3-phosphate. Lys193 functions as the Proton acceptor in the catalytic mechanism. Arg257 is an NADPH binding site. NADPH-binding residues include Val281 and Glu283.

Belongs to the NAD-dependent glycerol-3-phosphate dehydrogenase family.

The protein localises to the cytoplasm. It carries out the reaction sn-glycerol 3-phosphate + NAD(+) = dihydroxyacetone phosphate + NADH + H(+). The catalysed reaction is sn-glycerol 3-phosphate + NADP(+) = dihydroxyacetone phosphate + NADPH + H(+). Its pathway is membrane lipid metabolism; glycerophospholipid metabolism. Functionally, catalyzes the reduction of the glycolytic intermediate dihydroxyacetone phosphate (DHAP) to sn-glycerol 3-phosphate (G3P), the key precursor for phospholipid synthesis. In Shouchella clausii (strain KSM-K16) (Alkalihalobacillus clausii), this protein is Glycerol-3-phosphate dehydrogenase [NAD(P)+].